Here is a 323-residue protein sequence, read N- to C-terminus: HTH-type transcriptional activator CmpR (323 aa).

The HTH lysR-type domain maps to 4–61; sequence LTLHQLKVFEAAARHSSFTRAAEELYLTQPTVSIQVKQLTKAVGLPLFEQIGKRLYLT. Residues 21-40 constitute a DNA-binding region (H-T-H motif); that stretch reads FTRAAEELYLTQPTVSIQVK. The interval 304 to 323 is disordered; the sequence is IPESTTTDPELDAPQPVVGV.

This sequence belongs to the LysR transcriptional regulatory family.

The protein resides in the cytoplasm. In terms of biological role, activates transcription of the cmpABCD operon under carbon dioxide-limited conditions. This chain is HTH-type transcriptional activator CmpR (cmpR), found in Synechococcus elongatus (strain ATCC 33912 / PCC 7942 / FACHB-805) (Anacystis nidulans R2).